The primary structure comprises 157 residues: Protein GrpE (157 aa).

Residues 1 to 10 (MQEENQHPEQ) are compositionally biased toward basic and acidic residues. The interval 1–21 (MQEENQHPEQDDISEAQDAGA) is disordered.

It belongs to the GrpE family. In terms of assembly, homodimer.

Its subcellular location is the cytoplasm. Its function is as follows. Participates actively in the response to hyperosmotic and heat shock by preventing the aggregation of stress-denatured proteins, in association with DnaK and GrpE. It is the nucleotide exchange factor for DnaK and may function as a thermosensor. Unfolded proteins bind initially to DnaJ; upon interaction with the DnaJ-bound protein, DnaK hydrolyzes its bound ATP, resulting in the formation of a stable complex. GrpE releases ADP from DnaK; ATP binding to DnaK triggers the release of the substrate protein, thus completing the reaction cycle. Several rounds of ATP-dependent interactions between DnaJ, DnaK and GrpE are required for fully efficient folding. The sequence is that of Protein GrpE from Methylovorus sp. (strain SS1 / DSM 11726).